Reading from the N-terminus, the 62-residue chain is UPF0339 protein Atu5359 (62 aa).

This sequence belongs to the UPF0339 family.

This Agrobacterium fabrum (strain C58 / ATCC 33970) (Agrobacterium tumefaciens (strain C58)) protein is UPF0339 protein Atu5359.